We begin with the raw amino-acid sequence, 348 residues long: D-erythrose-4-phosphate dehydrogenase (348 aa).

Residues 12–13 (RI) and Arg81 each bind NAD(+). Substrate-binding positions include 154 to 156 (SCT), Arg200, 213 to 214 (TK), and Arg236. The Nucleophile role is filled by Cys155. Asn318 is an NAD(+) binding site.

It belongs to the glyceraldehyde-3-phosphate dehydrogenase family. Epd subfamily. Homotetramer.

The protein resides in the cytoplasm. The catalysed reaction is D-erythrose 4-phosphate + NAD(+) + H2O = 4-phospho-D-erythronate + NADH + 2 H(+). Its pathway is cofactor biosynthesis; pyridoxine 5'-phosphate biosynthesis; pyridoxine 5'-phosphate from D-erythrose 4-phosphate: step 1/5. In terms of biological role, catalyzes the NAD-dependent conversion of D-erythrose 4-phosphate to 4-phosphoerythronate. This Salmonella dublin (strain CT_02021853) protein is D-erythrose-4-phosphate dehydrogenase.